The chain runs to 719 residues: B3 domain-containing protein Os03g0120900 (719 aa).

Positions 7 to 110 (HHHFIKVMVG…HFMVLPFGLN (104 aa)) form a DNA-binding region, TF-B3. 2 disordered regions span residues 328–381 (RGSF…RSEQ) and 412–443 (EEPQ…RNAV). The segment covering 351–366 (DSAENTLKERSEERQP) has biased composition (basic and acidic residues). Over residues 416-430 (HNQGENEGNLDQVNN) the composition is skewed to polar residues.

It localises to the nucleus. This is B3 domain-containing protein Os03g0120900 from Oryza sativa subsp. japonica (Rice).